Here is a 207-residue protein sequence, read N- to C-terminus: Guanylate kinase (207 aa).

A Guanylate kinase-like domain is found at 5 to 185 (GFVLLISGPS…SYEALRAILI (181 aa)). 12 to 19 (GPSGAGKS) provides a ligand contact to ATP.

It belongs to the guanylate kinase family.

It is found in the cytoplasm. The enzyme catalyses GMP + ATP = GDP + ADP. Its function is as follows. Essential for recycling GMP and indirectly, cGMP. The sequence is that of Guanylate kinase (gmk) from Campylobacter jejuni subsp. jejuni serotype O:2 (strain ATCC 700819 / NCTC 11168).